The chain runs to 238 residues: MDFKKEETLRRGPWLEEEDERLVKVISLLGERRWDSLAIVSGLKRSGKSCRLRWMNYLNPTLKRGPMSQEEERIIFQLHALWGNKWSKIARRLPGRTDNEIKNYWRTHYRKKQEAQNYGKLFEWRGNTGEELLHKYKETEITRTKTTSQEHGFVEVVSMESGKEANGGVGGRESFGVMKSPYENRISDWISEISTDQSEANLSEDHSSNSCSENNINIGTWWFQETRDFEEFSCSLWS.

2 consecutive HTH myb-type domains span residues 6–58 (EETL…MNYL) and 59–113 (NPTL…RKKQ). The Nuclear localization signal motif lies at 31 to 38 (ERRWDSLA). DNA-binding regions (H-T-H motif) lie at residues 34–58 (WDSL…MNYL) and 86–109 (WSKI…RTHY).

Its subcellular location is the nucleus. This Arabidopsis thaliana (Mouse-ear cress) protein is Transcription factor MYB27.